Consider the following 165-residue polypeptide: Xanthine-guanine phosphoribosyltransferase (165 aa).

5-phospho-alpha-D-ribose 1-diphosphate is bound by residues 41 to 42 (RG) and 98 to 106 (DDLTDTGKT). Aspartate 99 contributes to the Mg(2+) binding site. Residues aspartate 102 and isoleucine 145 each contribute to the guanine site. Xanthine contacts are provided by aspartate 102 and isoleucine 145. GMP is bound by residues 102–106 (DTGKT) and 144–145 (WI).

It belongs to the purine/pyrimidine phosphoribosyltransferase family. XGPT subfamily. As to quaternary structure, homotetramer. Mg(2+) serves as cofactor.

The protein localises to the cell inner membrane. The enzyme catalyses GMP + diphosphate = guanine + 5-phospho-alpha-D-ribose 1-diphosphate. It carries out the reaction XMP + diphosphate = xanthine + 5-phospho-alpha-D-ribose 1-diphosphate. It catalyses the reaction IMP + diphosphate = hypoxanthine + 5-phospho-alpha-D-ribose 1-diphosphate. Its pathway is purine metabolism; GMP biosynthesis via salvage pathway; GMP from guanine: step 1/1. It functions in the pathway purine metabolism; XMP biosynthesis via salvage pathway; XMP from xanthine: step 1/1. Purine salvage pathway enzyme that catalyzes the transfer of the ribosyl-5-phosphate group from 5-phospho-alpha-D-ribose 1-diphosphate (PRPP) to the N9 position of the 6-oxopurines guanine and xanthine to form the corresponding ribonucleotides GMP (guanosine 5'-monophosphate) and XMP (xanthosine 5'-monophosphate), with the release of PPi. To a lesser extent, also acts on hypoxanthine. This Chelativorans sp. (strain BNC1) protein is Xanthine-guanine phosphoribosyltransferase.